The chain runs to 1226 residues: Methionine synthase (1226 aa).

A Hcy-binding domain is found at 6–326 (RAQIEAQLKQ…EHIRHMAMAV (321 aa)). The Zn(2+) site is built by C248, C311, and C312. The Pterin-binding domain occupies 357–618 (FVNVGERTNV…VPEKLREAVE (262 aa)). The 95-residue stretch at 651–745 (SALEWRTWSV…FINASKQAGS (95 aa)) folds into the B12-binding N-terminal domain. Residues E695, 757–761 (GDVHD), H760, S805, T809, and A861 contribute to the methylcob(III)alamin site. In terms of domain architecture, B12-binding spans 747-882 (NGKILLATVK…SDELRPAFVE (136 aa)). In terms of domain architecture, AdoMet activation spans 898–1226 (KKPRTKPVTL…EKWLGPNING (329 aa)). S-adenosyl-L-methionine is bound by residues D948, R1136, and 1191–1192 (YF).

The protein belongs to the vitamin-B12 dependent methionine synthase family. It depends on methylcob(III)alamin as a cofactor. Requires Zn(2+) as cofactor.

The enzyme catalyses (6S)-5-methyl-5,6,7,8-tetrahydrofolate + L-homocysteine = (6S)-5,6,7,8-tetrahydrofolate + L-methionine. It participates in amino-acid biosynthesis; L-methionine biosynthesis via de novo pathway; L-methionine from L-homocysteine (MetH route): step 1/1. Functionally, catalyzes the transfer of a methyl group from methyl-cobalamin to homocysteine, yielding enzyme-bound cob(I)alamin and methionine. Subsequently, remethylates the cofactor using methyltetrahydrofolate. The sequence is that of Methionine synthase (metH) from Vibrio vulnificus (strain CMCP6).